Reading from the N-terminus, the 1400-residue chain is DNA-directed RNA polymerase subunit beta' (1400 aa).

Residues C71, C73, C86, and C89 each coordinate Zn(2+). The Mg(2+) site is built by D462, D464, and D466. Zn(2+) is bound by residues C820, C893, C900, and C903.

The protein belongs to the RNA polymerase beta' chain family. The RNAP catalytic core consists of 2 alpha, 1 beta, 1 beta' and 1 omega subunit. When a sigma factor is associated with the core the holoenzyme is formed, which can initiate transcription. Mg(2+) is required as a cofactor. Requires Zn(2+) as cofactor.

It carries out the reaction RNA(n) + a ribonucleoside 5'-triphosphate = RNA(n+1) + diphosphate. Functionally, DNA-dependent RNA polymerase catalyzes the transcription of DNA into RNA using the four ribonucleoside triphosphates as substrates. The protein is DNA-directed RNA polymerase subunit beta' of Methylobacterium sp. (strain 4-46).